We begin with the raw amino-acid sequence, 209 residues long: NAD(P)H-quinone oxidoreductase subunit N, chloroplastic (209 aa).

The transit peptide at 1–45 (MGSRAICIQRVAPPCFEASQVKKIKTVGSFLVNTRSKRRRSTGVK) directs the protein to the chloroplast.

It belongs to the NDH complex subunit N family. Part of the chloroplast NDH complex, composed of a mixture of chloroplast and nucleus encoded subunits. Component of the NDH subcomplex A, at least composed of ndhH, ndhI, ndhJ, ndhK, ndhL, ndhM, ndhN and ndhO.

The protein resides in the plastid. The protein localises to the chloroplast thylakoid membrane. It carries out the reaction a plastoquinone + NADH + (n+1) H(+)(in) = a plastoquinol + NAD(+) + n H(+)(out). The enzyme catalyses a plastoquinone + NADPH + (n+1) H(+)(in) = a plastoquinol + NADP(+) + n H(+)(out). In terms of biological role, NDH shuttles electrons from NAD(P)H:plastoquinone, via FMN and iron-sulfur (Fe-S) centers, to quinones in the photosynthetic chain and possibly in a chloroplast respiratory chain. The immediate electron acceptor for the enzyme in this species is believed to be plastoquinone. Couples the redox reaction to proton translocation, and thus conserves the redox energy in a proton gradient. The chain is NAD(P)H-quinone oxidoreductase subunit N, chloroplastic from Arabidopsis thaliana (Mouse-ear cress).